The sequence spans 356 residues: MEYINWDNYSLEDLFGDIDNYTYNTEMPIIPADSAPCRPESLDINKYAVVVIYVLVFVLNLLGNSLVIMVVLYSRVSHSVTDVYLLNLAIADLLFALTLPIWAVSKVKGWIFGTPLCKIVSLLKEVNFYSGILLLASISMDRYLAIVHATRRLTQKKHWVKFICLGIWALSLILSLPIFVFRRAINPPYSSPVCYEDMGTNTTKLRIVMRALPQTFGFIVPLMIMLFCYGLTLRTLFEAHMGQKHRAMRVIFAVVLVFLLCWLPYNLVADTLMRLQAIEETCQRRNDIGRALDATEILGFFHSCLNPLIYAFIGQKFRHGLLKIMAFHGLISKEYLPKDSRPSFVGSSSANTSTTF.

Topologically, residues 1–46 (MEYINWDNYSLEDLFGDIDNYTYNTEMPIIPADSAPCRPESLDINK) are extracellular. Residues Asn-8 and Asn-20 are each glycosylated (N-linked (GlcNAc...) asparagine). Residues 47–73 (YAVVVIYVLVFVLNLLGNSLVIMVVLY) traverse the membrane as a helical segment. Topologically, residues 74–82 (SRVSHSVTD) are cytoplasmic. A helical membrane pass occupies residues 83 to 103 (VYLLNLAIADLLFALTLPIWA). Over 104-118 (VSKVKGWIFGTPLCK) the chain is Extracellular. The cysteines at positions 117 and 194 are disulfide-linked. A helical transmembrane segment spans residues 119–140 (IVSLLKEVNFYSGILLLASISM). The Cytoplasmic portion of the chain corresponds to 141 to 161 (DRYLAIVHATRRLTQKKHWVK). The chain crosses the membrane as a helical span at residues 162–181 (FICLGIWALSLILSLPIFVF). The Extracellular segment spans residues 182 to 206 (RRAINPPYSSPVCYEDMGTNTTKLR). A helical membrane pass occupies residues 207 to 229 (IVMRALPQTFGFIVPLMIMLFCY). Over 230 to 249 (GLTLRTLFEAHMGQKHRAMR) the chain is Cytoplasmic. Residues 250–269 (VIFAVVLVFLLCWLPYNLVA) form a helical membrane-spanning segment. The Extracellular portion of the chain corresponds to 270–290 (DTLMRLQAIEETCQRRNDIGR). A helical transmembrane segment spans residues 291–311 (ALDATEILGFFHSCLNPLIYA). The Cytoplasmic segment spans residues 312 to 356 (FIGQKFRHGLLKIMAFHGLISKEYLPKDSRPSFVGSSSANTSTTF).

This sequence belongs to the G-protein coupled receptor 1 family. In terms of assembly, interacts with IL8. Interacts with GNAI2. In terms of processing, phosphorylated upon ligand binding; which is required for desensitization.

The protein localises to the cell membrane. Its function is as follows. Receptor for interleukin-8 which is a powerful neutrophil chemotactic factor. Binding of IL-8 to the receptor causes activation of neutrophils. This response is mediated via a G-protein that activates a phosphatidylinositol-calcium second messenger system. Binds to IL-8 with high affinity. Also binds with high affinity to CXCL3, GRO/MGSA and NAP-2. This chain is C-X-C chemokine receptor type 2 (CXCR2), found in Canis lupus familiaris (Dog).